Here is a 238-residue protein sequence, read N- to C-terminus: Immunoglobulin superfamily member 6 (238 aa).

A signal peptide spans 1–27 (MGPVSTSRRGLRLGISLILLQVGVVGA). Residues 28 to 153 (CTVSVLQPGY…RLFSREVHSL (126 aa)) are Extracellular-facing. Residues 30–134 (VSVLQPGYLE…EPVPTAKQTG (105 aa)) form the Ig-like C2-type domain. C51 and C118 are disulfide-bonded. The helical transmembrane segment at 154-174 (LIVLLALLAVYVTGVCVIFIV) threads the bilayer. The Cytoplasmic segment spans residues 175 to 238 (LFRSKSNTPR…RKALPSPGRP (64 aa)). Over residues 215 to 230 (ETSHQPEQDGNYENRK) the composition is skewed to basic and acidic residues. Residues 215 to 238 (ETSHQPEQDGNYENRKALPSPGRP) are disordered.

It is found in the membrane. The sequence is that of Immunoglobulin superfamily member 6 (Igsf6) from Rattus norvegicus (Rat).